The following is a 555-amino-acid chain: Formate--tetrahydrofolate ligase (555 aa).

65–72 (TPAGEGKS) contacts ATP.

Belongs to the formate--tetrahydrofolate ligase family.

The enzyme catalyses (6S)-5,6,7,8-tetrahydrofolate + formate + ATP = (6R)-10-formyltetrahydrofolate + ADP + phosphate. The protein operates within one-carbon metabolism; tetrahydrofolate interconversion. This chain is Formate--tetrahydrofolate ligase, found in Staphylococcus epidermidis (strain ATCC 35984 / DSM 28319 / BCRC 17069 / CCUG 31568 / BM 3577 / RP62A).